The sequence spans 625 residues: Vitamin B12 transporter BtuB (625 aa).

The first 21 residues, 1 to 21 (MTIKKYTLLTALSVTAFSGWA), serve as a signal peptide directing secretion. Residues 31-38 (DEMVVTAN) carry the TonB box motif. The TBDR plug domain occupies 43 to 157 (PKSSVLAPVD…IGGVINILTG (115 aa)). Cyanocob(III)alamin is bound by residues Ser90, Asn97, and 115–116 (IT). Positions 160-625 (KPGTTLSAGL…EYYFTGSYNF (466 aa)) constitute a TBDR beta-barrel domain. 3 beta stranded membrane-spanning segments follow: residues 163 to 170 (TTLSAGLG), 174 to 183 (YQTYDGSTQQ), and 189 to 200 (TTVTLAGNYTYS). Ca(2+) contacts are provided by Asp204, Gln217, Asp219, and Asp221. The next 2 membrane-spanning stretches (beta stranded) occupy residues 223 to 233 (FMGKMLWAGLE) and 238 to 254 (EQFN…NRSD). Residues Tyr255, Asp256, and Asp269 each coordinate Ca(2+). A run of 14 beta stranded transmembrane segments spans residues 271 to 285 (RKLS…LRYK), 287 to 304 (GIYA…KDYN), 317 to 333 (SLDE…NTFQ), 336 to 345 (NGMISAGADW), 363 to 379 (FTQH…QQIS), 381 to 391 (VTLEGAVRSDD), 395 to 410 (FGWH…WEFI), 413 to 427 (YRLI…KAPN), 445 to 454 (ESKQWEGGVE), 460 to 469 (LTWRLSAYRN), 484 to 501 (YFNI…TGSF), 505 to 520 (PLSH…PRNA), 528 to 540 (RRAK…QLDW), and 546 to 561 (DWSV…YDKD). Ser317 serves as a coordination point for cyanocob(III)alamin. Residue Arg528 coordinates cyanocob(III)alamin. Tyr562 serves as a coordination point for cyanocob(III)alamin. A run of 3 beta stranded transmembrane segments spans residues 569-583 (TVEL…LAVS), 596-607 (IANLFDKDYEMV), and 613-625 (PGRE…SYNF). A TonB C-terminal box motif is present at residues 608–625 (YGYQTPGREYYFTGSYNF).

Belongs to the TonB-dependent receptor family. BtuB (TC 1.B.14.3.1) subfamily.

Its subcellular location is the cell outer membrane. Involved in the active translocation of vitamin B12 (cyanocobalamin) across the outer membrane to the periplasmic space. It derives its energy for transport by interacting with the trans-periplasmic membrane protein TonB. The protein is Vitamin B12 transporter BtuB of Yersinia pestis bv. Antiqua (strain Antiqua).